The sequence spans 455 residues: tRNA modification GTPase MnmE (455 aa).

3 residues coordinate (6S)-5-formyl-5,6,7,8-tetrahydrofolate: Arg-24, Glu-81, and Lys-121. The TrmE-type G domain maps to 217-378 (GMKVVIAGRP…LREHLKDCMG (162 aa)). Residue Asn-227 participates in K(+) binding. GTP is bound by residues 227 to 232 (NAGKSS), 246 to 252 (TDIAGTT), 271 to 274 (DTAG), and 359 to 361 (SAR). Ser-231 serves as a coordination point for Mg(2+). Positions 246, 248, and 251 each coordinate K(+). Thr-252 contacts Mg(2+). Lys-455 serves as a coordination point for (6S)-5-formyl-5,6,7,8-tetrahydrofolate.

The protein belongs to the TRAFAC class TrmE-Era-EngA-EngB-Septin-like GTPase superfamily. TrmE GTPase family. As to quaternary structure, homodimer. Heterotetramer of two MnmE and two MnmG subunits. K(+) is required as a cofactor.

It is found in the cytoplasm. In terms of biological role, exhibits a very high intrinsic GTPase hydrolysis rate. Involved in the addition of a carboxymethylaminomethyl (cmnm) group at the wobble position (U34) of certain tRNAs, forming tRNA-cmnm(5)s(2)U34. In Photobacterium profundum (strain SS9), this protein is tRNA modification GTPase MnmE.